Here is a 245-residue protein sequence, read N- to C-terminus: tRNA pseudouridine synthase A (245 aa).

The Nucleophile role is filled by Asp-52. Position 111 (Tyr-111) interacts with substrate.

This sequence belongs to the tRNA pseudouridine synthase TruA family. Homodimer.

The enzyme catalyses uridine(38/39/40) in tRNA = pseudouridine(38/39/40) in tRNA. Functionally, formation of pseudouridine at positions 38, 39 and 40 in the anticodon stem and loop of transfer RNAs. The chain is tRNA pseudouridine synthase A from Ehrlichia chaffeensis (strain ATCC CRL-10679 / Arkansas).